Here is a 141-residue protein sequence, read N- to C-terminus: Hemoglobin subunit alpha (141 aa).

Positions 1 to 141 (VLSDKDKTNV…VSTVLTSKYR (141 aa)) constitute a Globin domain. Phosphoserine is present on Ser-3. The residue at position 7 (Lys-7) is an N6-succinyllysine. Thr-8 carries the phosphothreonine modification. The residue at position 11 (Lys-11) is an N6-succinyllysine. The residue at position 16 (Lys-16) is an N6-acetyllysine; alternate. Residue Lys-16 is modified to N6-succinyllysine; alternate. At Tyr-24 the chain carries Phosphotyrosine. Ser-35 carries the post-translational modification Phosphoserine. Lys-40 carries the N6-succinyllysine modification. Ser-49 is modified (phosphoserine). Residue His-58 coordinates O2. His-87 serves as a coordination point for heme b. Residue Ser-102 is modified to Phosphoserine. Position 108 is a phosphothreonine (Thr-108). Ser-124 carries the post-translational modification Phosphoserine. Phosphothreonine is present on residues Thr-134 and Thr-137. A Phosphoserine modification is found at Ser-138.

This sequence belongs to the globin family. As to quaternary structure, heterotetramer of two alpha chains and two beta chains. In terms of tissue distribution, red blood cells.

Involved in oxygen transport from the lung to the various peripheral tissues. In terms of biological role, hemopressin acts as an antagonist peptide of the cannabinoid receptor CNR1. Hemopressin-binding efficiently blocks cannabinoid receptor CNR1 and subsequent signaling. This chain is Hemoglobin subunit alpha (HBA), found in Elephas maximus (Indian elephant).